The following is a 360-amino-acid chain: Magnesium-protoporphyrin IX monomethyl ester [oxidative] cyclase (360 aa).

A disordered region spans residues 1 to 20 (MVPPTAIAEASRSGGEPAIK).

It belongs to the AcsF family. Requires Fe cation as cofactor.

It catalyses the reaction Mg-protoporphyrin IX 13-monomethyl ester + 3 NADPH + 3 O2 + 2 H(+) = 3,8-divinyl protochlorophyllide a + 3 NADP(+) + 5 H2O. Its pathway is porphyrin-containing compound metabolism; chlorophyll biosynthesis (light-independent). Catalyzes the formation of the isocyclic ring in chlorophyll biosynthesis. Mediates the cyclase reaction, which results in the formation of divinylprotochlorophyllide (Pchlide) characteristic of all chlorophylls from magnesium-protoporphyrin IX 13-monomethyl ester (MgPMME). In Synechococcus sp. (strain RCC307), this protein is Magnesium-protoporphyrin IX monomethyl ester [oxidative] cyclase.